A 227-amino-acid chain; its full sequence is 4'-phosphopantetheinyl transferase PptT (227 aa).

CoA is bound by residues Arg48, Arg56, 75–78, 92–93, and Asp114; these read KGDK and TH. Residues Asp114, Ala115, and Glu116 each coordinate Mg(2+). CoA-binding residues include Glu157, Lys161, and Leu171.

Belongs to the P-Pant transferase superfamily. Mg(2+) is required as a cofactor.

It carries out the reaction apo-[ACP] + CoA = holo-[ACP] + adenosine 3',5'-bisphosphate + H(+). Inhibited by the amidino-urea compound 1-[(2,6-diethylphenyl)-3-N-ethylcarbamimodoyl]urea (compound 8918). It acts by binding to the phosphopantetheine pocket in the active site. Inhibition by compound 8918 kills M.tuberculosis. Transfers the 4'-phosphopantetheine moiety from coenzyme A to a Ser of acyl-carrier-protein. Involved in post-translational modification of various type-I polyketide synthases required for the formation of both mycolic acids and lipid virulence factors. Acts on Pks13, Mas, PpsA, PpsB, PpsC and PpsD. Also acts on AcpM, the meromycolate extension acyl carrier protein. In addition, is involved in the activation of the acyl carrier protein MbtL and the nonribosomal peptides synthases MbtB and MbtE, which are involved in the biosynthesis of the siderophore mycobactin. Functionally, required for the replication and survival of Mycobacterium during the acute and chronic phases of infection in mice. The protein is 4'-phosphopantetheinyl transferase PptT of Mycobacterium tuberculosis (strain ATCC 25618 / H37Rv).